The following is a 126-amino-acid chain: 13 kDa ribonucleoprotein-associated protein (126 aa).

Belongs to the eukaryotic ribosomal protein eL8 family. Component of the U3 snoRNP particle. Binds to the C'/D and B/C motifs in U3 snoRNA. Component of the 25S U4/U6.U5 tri-snRNP particle, a subcomplex of the spliceosome. Binds to the 5' stem-loop of U4 snRNA.

It localises to the nucleus. Its subcellular location is the nucleolus. In terms of biological role, common component of the spliceosome and rRNA processing machinery. In association with the spliceosomal U4/U6.U5 tri-snRNP particle, required for splicing of pre-mRNA. In association with box C/D snoRNPs, required for processing of pre-ribosomal RNA (rRNA) and site-specific 2'-O-methylation of substrate RNAs. Essential for the accumulation and stability of U4 snRNA, U6 snRNA, and box C/D snoRNAs. This Yarrowia lipolytica (strain CLIB 122 / E 150) (Yeast) protein is 13 kDa ribonucleoprotein-associated protein (SNU13).